We begin with the raw amino-acid sequence, 380 residues long: MTIMRKKHPLLKLINHSFIDLPAPSNISSWWNFGSLLGVCLMIQIMTGLFLAMHYTSDTTTAFSSVAHICRDVNYGWLIRYLHANGASMFFICLFIHVGRGIYYGSYMLLETWNIGIILFLTTMATAFVGYVLPXXQMSFWGATVITNLLSAIPYIGNTLLEWIWGGFSVDKATLTRFFAFHFILPFIITALVLVHLLFLHETGSNNPSGLNSNSDKIPFHPYYTIKDLLGVLLLLMVLMILVLFFPDILGDPDNYTPANPLNTPAHIKPEWYFLFAYAILRSIPNKLGGVLALILSILILAAFPFLNSSKQHGLVYRPITQFLYWIFIANLLILTWIGGQPVEYPFTTIGQISSILYFTIIVVLMPVANMIENNILXLH.

Helical transmembrane passes span 33 to 53, 77 to 98, 113 to 133, and 178 to 198; these read FGSL…FLAM, WLIR…FIHV, WNIG…GYVL, and FFAF…VHLL. 2 residues coordinate heme b: H83 and H97. Residues H182 and H196 each contribute to the heme b site. An a ubiquinone-binding site is contributed by H201. 4 helical membrane passes run 226 to 246, 288 to 308, 320 to 340, and 347 to 367; these read IKDL…VLFF, LGGV…PFLN, ITQF…WIGG, and FTTI…VLMP.

It belongs to the cytochrome b family. The cytochrome bc1 complex contains 11 subunits: 3 respiratory subunits (MT-CYB, CYC1 and UQCRFS1), 2 core proteins (UQCRC1 and UQCRC2) and 6 low-molecular weight proteins (UQCRH/QCR6, UQCRB/QCR7, UQCRQ/QCR8, UQCR10/QCR9, UQCR11/QCR10 and a cleavage product of UQCRFS1). This cytochrome bc1 complex then forms a dimer. Requires heme b as cofactor.

The protein resides in the mitochondrion inner membrane. Functionally, component of the ubiquinol-cytochrome c reductase complex (complex III or cytochrome b-c1 complex) that is part of the mitochondrial respiratory chain. The b-c1 complex mediates electron transfer from ubiquinol to cytochrome c. Contributes to the generation of a proton gradient across the mitochondrial membrane that is then used for ATP synthesis. This is Cytochrome b (MT-CYB) from Thomasomys ischyrus (Strong-tailed oldfield mouse).